Here is an 878-residue protein sequence, read N- to C-terminus: Alanine--tRNA ligase (878 aa).

Zn(2+) is bound by residues histidine 564, histidine 568, cysteine 665, and histidine 669.

Belongs to the class-II aminoacyl-tRNA synthetase family. Zn(2+) is required as a cofactor.

The protein localises to the cytoplasm. It carries out the reaction tRNA(Ala) + L-alanine + ATP = L-alanyl-tRNA(Ala) + AMP + diphosphate. Catalyzes the attachment of alanine to tRNA(Ala) in a two-step reaction: alanine is first activated by ATP to form Ala-AMP and then transferred to the acceptor end of tRNA(Ala). Also edits incorrectly charged Ser-tRNA(Ala) and Gly-tRNA(Ala) via its editing domain. The chain is Alanine--tRNA ligase from Natranaerobius thermophilus (strain ATCC BAA-1301 / DSM 18059 / JW/NM-WN-LF).